The chain runs to 1137 residues: Dendrite extension defective protein 1 (1137 aa).

The N-terminal stretch at 1–41 (MLAHTHRINKCLYGQNQMRNRHALLGALPPIFLLLLPLISC) is a signal peptide. Topologically, residues 43–1005 (KFDPERIAAR…HAEEQSPRLA (963 aa)) are extracellular. One can recognise an NIDO 1 domain in the interval 163-302 (PFWNRNDLRN…GEWMFELSEL (140 aa)). N-linked (GlcNAc...) asparagine glycosylation is found at N240 and N416. An EGF-like; calcium-binding domain is found at 409 to 450 (DVDECKTNSTICHKNAICTNTPGRYFCMCKEGFSGDGQNDCS). Disulfide bonds link C413–C426, C420–C435, and C437–C449. The NIDO 2 domain maps to 519–659 (PFFGPIDLSR…GTWLYRIDKA (141 aa)). A glycan (N-linked (GlcNAc...) asparagine) is linked at N571. A compositionally biased stretch (polar residues) spans 738–749 (IGNQQRQQTTKA). 5 disordered regions span residues 738 to 765 (IGNQ…HRPI), 795 to 856 (FRPN…PFEA), 878 to 897 (QTTK…EDLS), 906 to 933 (TEED…TKAH), and 978 to 998 (NSQP…GHAE). N-linked (GlcNAc...) asparagine glycosylation occurs at N756. A compositionally biased stretch (polar residues) spans 798 to 809 (NQRNGVQKSTQR). Residues 819–833 (PLKEEATTSVPREKT) show a composition bias toward basic and acidic residues. Residues 906–915 (TEEDEEEAEI) are compositionally biased toward acidic residues. A compositionally biased stretch (low complexity) spans 916–933 (STETTTEMSSTTTTTKAH). Residues 978–992 (NSQPPKQRNDNQPTV) show a composition bias toward polar residues. The chain crosses the membrane as a helical span at residues 1006–1026 (ILLPVMIILAWLVILVCIGAV). The Cytoplasmic portion of the chain corresponds to 1027 to 1037 (VCCKRRNSRES). The interval 1106 to 1125 (ARLSTQERQSPPSFVNNGYT) is disordered.

May be proteolytically cleaved and secreted.

Its subcellular location is the membrane. The protein localises to the cell projection. It is found in the dendrite. The protein resides in the secreted. Functionally, along with dyf-7, enables neurite growth and maintenance by anchoring amphid dendritic tips during neuron cell body migration in embryonic and larval development. Promotes seam cell remodeling during the dauer phase. Plays a role in positively regulating locomotion during the dauer phase. The protein is Dendrite extension defective protein 1 of Caenorhabditis elegans.